We begin with the raw amino-acid sequence, 225 residues long: Transcription factor MYB1 (225 aa).

HTH myb-type domains follow at residues 11–67 (LGRV…KPSI) and 68–118 (KRGH…YKKH). DNA-binding regions (H-T-H motif) lie at residues 39–63 (WKRV…LNYL) and 91–114 (WSLI…NTHL).

As to quaternary structure, no interactions with bHLH.

The protein localises to the nucleus. Its function is as follows. Activates DODA1 and CYP76AD1 in the betalain red pigment pathway. The chain is Transcription factor MYB1 from Beta vulgaris (Sugar beet).